Here is a 287-residue protein sequence, read N- to C-terminus: Taxis protein CheF2 (287 aa).

As to quaternary structure, interacts with chemotaxis (Che) proteins as well as flagella accessory (Fla) proteins.

In terms of biological role, involved in taxis signal transduction. The chain is Taxis protein CheF2 (cheF2) from Halobacterium salinarum (strain ATCC 29341 / DSM 671 / R1).